Reading from the N-terminus, the 884-residue chain is E3 ubiquitin-protein ligase BRE1-like 1 (884 aa).

The interval methionine 1 to serine 37 is disordered. A coiled-coil region spans residues tyrosine 49–leucine 86. A disordered region spans residues lysine 107–threonine 127. Low complexity predominate over residues serine 108–asparagine 121. Coiled-coil stretches lie at residues leucine 216–leucine 541, serine 580–isoleucine 663, arginine 696–aspartate 762, and lysine 789–arginine 827. The RING-type zinc-finger motif lies at cysteine 832–serine 871.

It belongs to the BRE1 family. In terms of assembly, interacts with SKIPA. Interacts with HUB2.

Its subcellular location is the nucleus. It carries out the reaction S-ubiquitinyl-[E2 ubiquitin-conjugating enzyme]-L-cysteine + [acceptor protein]-L-lysine = [E2 ubiquitin-conjugating enzyme]-L-cysteine + N(6)-ubiquitinyl-[acceptor protein]-L-lysine.. It participates in protein modification; protein ubiquitination. In terms of biological role, E3 ubiquitin-protein ligase that monoubiquitinates H2B to form H2BK143ub1. H2BK143ub1 gives a specific tag for epigenetic transcriptional activation and is a prerequisite for H3 Lys-4 methylation (H3K4me). It thereby plays a central role in histone code and gene regulation. H2B monoubiquitination (H2BK143ub1), mediated by HUB1, modulates transcriptional regulation of anther development, likely by promoting histone H3K4 dimethylation (H3K4me2) in the chromatin of the key tapetum degradation-related genes C4, CP1 and UDT1. The polypeptide is E3 ubiquitin-protein ligase BRE1-like 1 (Oryza sativa subsp. japonica (Rice)).